Consider the following 123-residue polypeptide: Small ribosomal subunit protein uS12 (123 aa).

The tract at residues 1 to 21 (MPTIEQLVRKGRQAKPKKSKT) is disordered. A compositionally biased stretch (basic residues) spans 9 to 20 (RKGRQAKPKKSK). Aspartate 89 is subject to 3-methylthioaspartic acid.

This sequence belongs to the universal ribosomal protein uS12 family. In terms of assembly, part of the 30S ribosomal subunit. Contacts proteins S8 and S17. May interact with IF1 in the 30S initiation complex.

With S4 and S5 plays an important role in translational accuracy. Functionally, interacts with and stabilizes bases of the 16S rRNA that are involved in tRNA selection in the A site and with the mRNA backbone. Located at the interface of the 30S and 50S subunits, it traverses the body of the 30S subunit contacting proteins on the other side and probably holding the rRNA structure together. The combined cluster of proteins S8, S12 and S17 appears to hold together the shoulder and platform of the 30S subunit. The chain is Small ribosomal subunit protein uS12 from Bifidobacterium longum subsp. infantis (strain ATCC 15697 / DSM 20088 / JCM 1222 / NCTC 11817 / S12).